We begin with the raw amino-acid sequence, 918 residues long: Rap guanine nucleotide exchange factor 3 (918 aa).

Position 79 is a phosphoserine (serine 79). The DEP domain maps to 110-186 (ATYPTLIRDR…RDAQFYRFPG (77 aa)). The interval 218–242 (TVALRKPPGQRTDEELDLIFEELLH) is interaction with PDE3B. Residues 311-314 (GQLA) and 321-322 (RA) each bind 3',5'-cyclic AMP. A disordered region spans residues 369–388 (TSQGAGPSRPPTPGRNRYTV). One can recognise an N-terminal Ras-GEF domain in the interval 384-521 (NRYTVMSGTP…EQYPERRRHH (138 aa)). Residues 398 to 422 (ELLLEAMRPDSSAHDPTETFLSDFL) form an interaction with PDE3B region. A phosphoserine mark is found at serine 531 and serine 859. The Ras-GEF domain maps to 665-884 (SAKDLAGQLT…SRISTCSEQS (220 aa)).

As to quaternary structure, interacts with PDE3B and PIK3R6; form a signaling complex that regulates phosphatidylinositol 3-kinase gamma in angiogenesis.

It localises to the cytoplasm. Its subcellular location is the membrane. Functionally, guanine nucleotide exchange factor (GEF) for RAP1A and RAP2A small GTPases that is activated by binding cAMP. Through simultaneous binding of PDE3B to RAPGEF3 and PIK3R6 is assembled in a signaling complex in which it activates the PI3K gamma complex and which is involved in angiogenesis. Plays a role in the modulation of the cAMP-induced dynamic control of endothelial barrier function through a pathway that is independent on Rho-mediated signaling. Required for the actin rearrangement at cell-cell junctions, such as stress fibers and junctional actin. In Mus musculus (Mouse), this protein is Rap guanine nucleotide exchange factor 3 (Rapgef3).